A 287-amino-acid chain; its full sequence is 4-hydroxybenzoate octaprenyltransferase (287 aa).

Helical transmembrane passes span 21–41 (VGIFLLLWPTLWAVWIAAKGA), 44–64 (FKIAVIFIAGSVVMRAAGCIV), 91–111 (VTEAMLLFAVLSLIAFTLVLL), 112–132 (LNRLTVELAVIGILLALVYPF), 139–159 (LPQLWLGVAFSWSIPMAFAAT), 160–180 (VGHVPAVAWLLFFAAVLWPIV), 211–231 (LMIGLLQGSVLLTFGLLGWYL), 235–255 (YWFYLGLLVALGLMCYQQFLI), and 263–283 (CFAAFRNNNWVGFFIFLGILL).

This sequence belongs to the UbiA prenyltransferase family. Mg(2+) serves as cofactor.

Its subcellular location is the cell inner membrane. The catalysed reaction is all-trans-octaprenyl diphosphate + 4-hydroxybenzoate = 4-hydroxy-3-(all-trans-octaprenyl)benzoate + diphosphate. Its pathway is cofactor biosynthesis; ubiquinone biosynthesis. In terms of biological role, catalyzes the prenylation of para-hydroxybenzoate (PHB) with an all-trans polyprenyl group. Mediates the second step in the final reaction sequence of ubiquinone-8 (UQ-8) biosynthesis, which is the condensation of the polyisoprenoid side chain with PHB, generating the first membrane-bound Q intermediate 3-octaprenyl-4-hydroxybenzoate. This chain is 4-hydroxybenzoate octaprenyltransferase, found in Coxiella burnetii (strain RSA 331 / Henzerling II).